The sequence spans 230 residues: MGEEGFLAHFAFSIGGLPITQSVLTTWFIMISLFIMAWSTTYKCSLLQPSTYQLLWEGVLSTMYDAIKEVLPDHVELIFPFVATLWIFILVSNLIGVIPGFYSPTADLSVTASLAMMTFLSVHWFGIRAEGWREYLKHYIKPTPFLLPFHLISEISRTLALAVRLFGNIMSLQLTALIVLMIAGFLVPIPILILHIIEAIIQAYIFGMLALIYIAGGIQAHELKSQGESL.

Transmembrane regions (helical) follow at residues 17 to 37 (LPIT…FIMA), 78 to 98 (IFPF…IGVI), 107 to 127 (DLSV…WFGI), 165 to 187 (LFGN…GFLV), and 198 to 218 (EAII…AGGI).

The protein belongs to the ATPase A chain family. In terms of assembly, F-type ATPases have 2 components, CF(1) - the catalytic core - and CF(0) - the membrane proton channel. CF(1) has five subunits: alpha(3), beta(3), gamma(1), delta(1), epsilon(1). CF(0) has three main subunits: a(1), b(2) and c(9-12). The alpha and beta chains form an alternating ring which encloses part of the gamma chain. CF(1) is attached to CF(0) by a central stalk formed by the gamma and epsilon chains, while a peripheral stalk is formed by the delta and b chains.

The protein localises to the cell inner membrane. In terms of biological role, key component of the proton channel; it plays a direct role in the translocation of protons across the membrane. The chain is ATP synthase subunit a from Legionella pneumophila (strain Corby).